Consider the following 359-residue polypeptide: Phospho-N-acetylmuramoyl-pentapeptide-transferase (359 aa).

Transmembrane regions (helical) follow at residues 27–47 (GAFF…INAL), 70–90 (TPTM…LLWA), 97–117 (VWLV…DDWA), 133–153 (LAIG…VHPE), 167–187 (VLLN…VGSA), 198–218 (GLAI…AYAV), 238–258 (LLIF…YNAP), 261–281 (AVFM…AIAV), 287–307 (IVLA…IVQV), and 336–356 (QVVI…LATL).

The protein belongs to the glycosyltransferase 4 family. MraY subfamily. Mg(2+) serves as cofactor.

It is found in the cell inner membrane. The catalysed reaction is UDP-N-acetyl-alpha-D-muramoyl-L-alanyl-gamma-D-glutamyl-meso-2,6-diaminopimeloyl-D-alanyl-D-alanine + di-trans,octa-cis-undecaprenyl phosphate = di-trans,octa-cis-undecaprenyl diphospho-N-acetyl-alpha-D-muramoyl-L-alanyl-D-glutamyl-meso-2,6-diaminopimeloyl-D-alanyl-D-alanine + UMP. Its pathway is cell wall biogenesis; peptidoglycan biosynthesis. Catalyzes the initial step of the lipid cycle reactions in the biosynthesis of the cell wall peptidoglycan: transfers peptidoglycan precursor phospho-MurNAc-pentapeptide from UDP-MurNAc-pentapeptide onto the lipid carrier undecaprenyl phosphate, yielding undecaprenyl-pyrophosphoryl-MurNAc-pentapeptide, known as lipid I. This is Phospho-N-acetylmuramoyl-pentapeptide-transferase from Jannaschia sp. (strain CCS1).